The following is a 70-amino-acid chain: Probable protein transport protein Sec61 subunit gamma (70 aa).

Over M1–Q39 the chain is Cytoplasmic. A helical transmembrane segment spans residues A40–I58. At H59–A70 the chain is on the extracellular side.

It belongs to the SecE/SEC61-gamma family. In terms of assembly, heterotrimeric complex composed of SEC61-alpha, SEC61-beta and SEC61-gamma.

It localises to the endoplasmic reticulum membrane. Functionally, necessary for protein translocation in the endoplasmic reticulum. The chain is Probable protein transport protein Sec61 subunit gamma from Neurospora crassa (strain ATCC 24698 / 74-OR23-1A / CBS 708.71 / DSM 1257 / FGSC 987).